The following is a 359-amino-acid chain: Peptide chain release factor 1 (359 aa).

Residue Gln235 is modified to N5-methylglutamine.

Belongs to the prokaryotic/mitochondrial release factor family. Methylated by PrmC. Methylation increases the termination efficiency of RF1.

The protein localises to the cytoplasm. Functionally, peptide chain release factor 1 directs the termination of translation in response to the peptide chain termination codons UAG and UAA. The protein is Peptide chain release factor 1 of Verminephrobacter eiseniae (strain EF01-2).